A 954-amino-acid chain; its full sequence is Leucine--tRNA ligase (954 aa).

Positions 67–78 (PYPSGAGLHVGH) match the 'HIGH' region motif. The 'KMSKS' region signature appears at 729–733 (KMGKS). Lysine 732 contributes to the ATP binding site.

It belongs to the class-I aminoacyl-tRNA synthetase family.

Its subcellular location is the cytoplasm. The enzyme catalyses tRNA(Leu) + L-leucine + ATP = L-leucyl-tRNA(Leu) + AMP + diphosphate. This Salinispora tropica (strain ATCC BAA-916 / DSM 44818 / JCM 13857 / NBRC 105044 / CNB-440) protein is Leucine--tRNA ligase.